A 75-amino-acid polypeptide reads, in one-letter code: Endogenous retrovirus group K member 10 Np9 protein (75 aa).

Residues 21-43 (PTAPKRQRPSRTGHDDDGGFVEK) are disordered. Residues 32–43 (TGHDDDGGFVEK) are compositionally biased toward basic and acidic residues.

The protein localises to the nucleus. Functionally, may possess a function in tumorigenesis. This chain is Endogenous retrovirus group K member 10 Np9 protein (ERVK-10), found in Homo sapiens (Human).